The primary structure comprises 431 residues: Ornithine decarboxylase (431 aa).

K94 is subject to N6-(pyridoxal phosphate)lysine. Pyridoxal 5'-phosphate is bound by residues S226, G264, and 297 to 300; that span reads EPGR. A substrate-binding site is contributed by 340–341; it reads YD. Catalysis depends on C376, which acts as the Proton donor; shared with dimeric partner. D377 contacts substrate. Y405 is a pyridoxal 5'-phosphate binding site.

Belongs to the Orn/Lys/Arg decarboxylase class-II family. As to quaternary structure, homodimer. Only the dimer is catalytically active, as the active sites are constructed of residues from both monomers. Pyridoxal 5'-phosphate serves as cofactor.

The catalysed reaction is L-ornithine + H(+) = putrescine + CO2. Its pathway is amine and polyamine biosynthesis; putrescine biosynthesis via L-ornithine pathway; putrescine from L-ornithine: step 1/1. With respect to regulation, inhibited by antizyme (AZ) in response to polyamine levels. AZ inhibits the assembly of the functional homodimer by binding to ODC monomers and targeting them for ubiquitin-independent proteolytic destruction by the 26S proteasome. Its function is as follows. Catalyzes the first and rate-limiting step of polyamine biosynthesis that converts ornithine into putrescine, which is the precursor for the polyamines, spermidine and spermine. Polyamines are essential for cell proliferation and are implicated in cellular processes, ranging from DNA replication to apoptosis. The polypeptide is Ornithine decarboxylase (Datura stramonium (Jimsonweed)).